The sequence spans 137 residues: MRKLIYIMVGIAGILGALSRYYLGLTIHEFWHHTFPLATLLINLAGCFLLAWLTTYIAKLNILPSDVITGIGTGFIGSFTTFSTFSVETIQLINHFEWGIAFLYVSCSILGGLIMSGLGYTLGDFLLKKHLTEGDHL.

4 helical membrane-spanning segments follow: residues 4-24 (LIYI…YYLG), 37-57 (LATL…TTYI), 67-87 (VITG…TFSV), and 98-118 (WGIA…MSGL). 2 residues coordinate Na(+): glycine 77 and threonine 80.

It belongs to the fluoride channel Fluc/FEX (TC 1.A.43) family.

It is found in the cell membrane. It carries out the reaction fluoride(in) = fluoride(out). Its activity is regulated as follows. Na(+) is not transported, but it plays an essential structural role and its presence is essential for fluoride channel function. In terms of biological role, fluoride-specific ion channel. Important for reducing fluoride concentration in the cell, thus reducing its toxicity. The chain is Fluoride-specific ion channel FluC 1 from Bacillus cereus (strain ZK / E33L).